The following is a 516-amino-acid chain: Probable D,D-dipeptide-binding periplasmic protein DdpA (516 aa).

A signal peptide spans 1–25 (MKRSISFRPTLLALVLATNFPVAHA).

It belongs to the bacterial solute-binding protein 5 family. The complex is composed of two ATP-binding proteins (DdpD and DdpF), two transmembrane proteins (DdpB and DdpC) and a solute-binding protein (DdpA).

The protein localises to the periplasm. Functionally, part of the ABC transporter complex DdpABCDF, which is probably involved in D,D-dipeptide transport. The polypeptide is Probable D,D-dipeptide-binding periplasmic protein DdpA (ddpA) (Escherichia coli (strain K12)).